The following is a 294-amino-acid chain: Ribosomal protein L11 methyltransferase (294 aa).

S-adenosyl-L-methionine is bound by residues threonine 144, glycine 165, aspartate 187, and asparagine 229.

This sequence belongs to the methyltransferase superfamily. PrmA family.

The protein localises to the cytoplasm. The enzyme catalyses L-lysyl-[protein] + 3 S-adenosyl-L-methionine = N(6),N(6),N(6)-trimethyl-L-lysyl-[protein] + 3 S-adenosyl-L-homocysteine + 3 H(+). In terms of biological role, methylates ribosomal protein L11. This chain is Ribosomal protein L11 methyltransferase, found in Cellvibrio japonicus (strain Ueda107) (Pseudomonas fluorescens subsp. cellulosa).